We begin with the raw amino-acid sequence, 112 residues long: UPF0342 protein SPT_0901 (112 aa).

It belongs to the UPF0342 family.

This chain is UPF0342 protein SPT_0901, found in Streptococcus pneumoniae (strain Taiwan19F-14).